Reading from the N-terminus, the 311-residue chain is Porphobilinogen deaminase (311 aa).

Cys-242 carries the post-translational modification S-(dipyrrolylmethanemethyl)cysteine.

The protein belongs to the HMBS family. Monomer. Dipyrromethane serves as cofactor.

The enzyme catalyses 4 porphobilinogen + H2O = hydroxymethylbilane + 4 NH4(+). Its pathway is porphyrin-containing compound metabolism; protoporphyrin-IX biosynthesis; coproporphyrinogen-III from 5-aminolevulinate: step 2/4. Functionally, tetrapolymerization of the monopyrrole PBG into the hydroxymethylbilane pre-uroporphyrinogen in several discrete steps. The sequence is that of Porphobilinogen deaminase (hemC) from Vibrio cholerae serotype O1 (strain ATCC 39315 / El Tor Inaba N16961).